Consider the following 141-residue polypeptide: ATP synthase epsilon chain (141 aa).

It belongs to the ATPase epsilon chain family. As to quaternary structure, F-type ATPases have 2 components, CF(1) - the catalytic core - and CF(0) - the membrane proton channel. CF(1) has five subunits: alpha(3), beta(3), gamma(1), delta(1), epsilon(1). CF(0) has three main subunits: a, b and c.

The protein resides in the cell inner membrane. Produces ATP from ADP in the presence of a proton gradient across the membrane. This Burkholderia mallei (strain NCTC 10247) protein is ATP synthase epsilon chain.